The following is a 100-amino-acid chain: Small ribosomal subunit protein uS14m (100 aa).

This sequence belongs to the universal ribosomal protein uS14 family.

It is found in the mitochondrion. In Vicia faba (Broad bean), this protein is Small ribosomal subunit protein uS14m (RPS14).